A 544-amino-acid polypeptide reads, in one-letter code: MSKFIFVTGGVVSSVGKGITVASLGNILKSRGLSVSVQKLDPYLNVDPGTMSPYQHGEVFVTQDGAETDLDLGSYERFIDIELTADSTVTSGQVYSEVINKERRGDYLGGTIQVVPHVTQEIKARIQRLADRSKADVVIVEVGGTVGDIEGQPFLEAIRQMRNDTGRDNVLYIHVTLLPYIQSTQELKTKPTQHSVNELRRIGIQPDIIVCRADYPISEGIRDKISLFCDVERKAVIFMPTVSTIYEVPLKLESEGVGDLLVSRLHLNASPSDLSVWRGLVEKIKEPTPTVRIALVGKYVELKDAYYSVRESLCHAAIHNGRDIQIDWVHAEDIEKNGPEEYLKHVQGIIIPGGFGIRGIEGMISAVKYARENGIPYLGLCLGMQVMVIEFARYVLGSDKAHSTEFEPDSPYPVIDLLPEQRGVDSKGGTMRLGNYPCVIQPGTMAGQAYGNNLINERHRHRFEFNNDYRDTLSKAGMLFSGLSPDGKLVEICEVTGHPFMMGSQFHPEFLSRPNRPHPLFREFINAAKKVIRDGEQPSLPLSP.

An amidoligase domain region spans residues 1-267; it reads MSKFIFVTGG…GDLLVSRLHL (267 aa). Serine 13 contributes to the CTP binding site. Serine 13 is a binding site for UTP. ATP is bound at residue 14 to 19; that stretch reads SVGKGI. Tyrosine 54 is an L-glutamine binding site. An ATP-binding site is contributed by aspartate 71. Mg(2+)-binding residues include aspartate 71 and glutamate 141. CTP-binding positions include 148 to 150, 188 to 193, and lysine 224; these read DIE and KTKPTQ. UTP is bound by residues 188-193 and lysine 224; that span reads KTKPTQ. Residues 299–534 form the Glutamine amidotransferase type-1 domain; sequence YVELKDAYYS…INAAKKVIRD (236 aa). Glycine 354 provides a ligand contact to L-glutamine. The Nucleophile; for glutamine hydrolysis role is filled by cysteine 381. L-glutamine is bound by residues 382-385, glutamate 405, and arginine 462; that span reads LGMQ. Residues histidine 507 and glutamate 509 contribute to the active site.

The protein belongs to the CTP synthase family. Homotetramer.

The catalysed reaction is UTP + L-glutamine + ATP + H2O = CTP + L-glutamate + ADP + phosphate + 2 H(+). It catalyses the reaction L-glutamine + H2O = L-glutamate + NH4(+). It carries out the reaction UTP + NH4(+) + ATP = CTP + ADP + phosphate + 2 H(+). It participates in pyrimidine metabolism; CTP biosynthesis via de novo pathway; CTP from UDP: step 2/2. Allosterically activated by GTP, when glutamine is the substrate; GTP has no effect on the reaction when ammonia is the substrate. The allosteric effector GTP functions by stabilizing the protein conformation that binds the tetrahedral intermediate(s) formed during glutamine hydrolysis. Inhibited by the product CTP, via allosteric rather than competitive inhibition. In terms of biological role, catalyzes the ATP-dependent amination of UTP to CTP with either L-glutamine or ammonia as the source of nitrogen. Regulates intracellular CTP levels through interactions with the four ribonucleotide triphosphates. This chain is CTP synthase, found in Dehalococcoides mccartyi (strain ATCC BAA-2100 / JCM 16839 / KCTC 5957 / BAV1).